Here is a 189-residue protein sequence, read N- to C-terminus: Peptidyl-tRNA hydrolase (189 aa).

Tyr15 contacts tRNA. His20 acts as the Proton acceptor in catalysis. TRNA contacts are provided by Phe66, Asn68, and Asn114.

Belongs to the PTH family. Monomer.

It is found in the cytoplasm. The catalysed reaction is an N-acyl-L-alpha-aminoacyl-tRNA + H2O = an N-acyl-L-amino acid + a tRNA + H(+). Hydrolyzes ribosome-free peptidyl-tRNAs (with 1 or more amino acids incorporated), which drop off the ribosome during protein synthesis, or as a result of ribosome stalling. Its function is as follows. Catalyzes the release of premature peptidyl moieties from peptidyl-tRNA molecules trapped in stalled 50S ribosomal subunits, and thus maintains levels of free tRNAs and 50S ribosomes. This chain is Peptidyl-tRNA hydrolase, found in Streptococcus pneumoniae (strain Taiwan19F-14).